The sequence spans 90 residues: MKYFTLFMISYIFISIFVFSHIHDVEARNRICRTSEKYYREFCGHAGNDDCLSKSTKKPKPFKCVCHDNRSQNITSINDRYNNCICTFYC.

An N-terminal signal peptide occupies residues 1-27 (MKYFTLFMISYIFISIFVFSHIHDVEA). 4 disulfide bridges follow: Cys-32-Cys-90, Cys-43-Cys-66, Cys-51-Cys-84, and Cys-64-Cys-86.

The protein belongs to the DEFL family.

It localises to the secreted. This is Putative defensin-like protein 168 from Arabidopsis thaliana (Mouse-ear cress).